The chain runs to 601 residues: Glutamine--fructose-6-phosphate aminotransferase [isomerizing] (601 aa).

Cys-2 (nucleophile; for GATase activity) is an active-site residue. A Glutamine amidotransferase type-2 domain is found at 2 to 214 (CGITGYIGTD…NGDIAHLTET (213 aa)). SIS domains lie at 281 to 420 (STET…ARNA) and 453 to 591 (IGRE…IDKP). Lys-596 serves as the catalytic For Fru-6P isomerization activity.

In terms of assembly, homodimer.

The protein localises to the cytoplasm. It catalyses the reaction D-fructose 6-phosphate + L-glutamine = D-glucosamine 6-phosphate + L-glutamate. Catalyzes the first step in hexosamine metabolism, converting fructose-6P into glucosamine-6P using glutamine as a nitrogen source. The polypeptide is Glutamine--fructose-6-phosphate aminotransferase [isomerizing] (Halobacterium salinarum (strain ATCC 700922 / JCM 11081 / NRC-1) (Halobacterium halobium)).